The sequence spans 534 residues: 5'-nucleotidase domain-containing protein 3 (534 aa).

D104 acts as the Nucleophile in catalysis. Positions 104 and 106 each coordinate Mg(2+). D106 acts as the Proton donor in catalysis. Position 234–242 (234–242 (KEAIRDVHV)) interacts with substrate. D372 contacts Mg(2+).

It belongs to the 5'(3')-deoxyribonucleotidase family. Mg(2+) is required as a cofactor.

This Xenopus tropicalis (Western clawed frog) protein is 5'-nucleotidase domain-containing protein 3 (nt5dc3).